A 69-amino-acid polypeptide reads, in one-letter code: uncharacterized protein (69 aa).

This is an uncharacterized protein from Sinorhizobium fredii (strain NBRC 101917 / NGR234).